We begin with the raw amino-acid sequence, 670 residues long: Lebercilin-like protein (670 aa).

Residues 30 to 51 are disordered; that stretch reads KRSPGTGDFSRNSNASNKSVDY. Positions 38–51 are enriched in polar residues; the sequence is FSRNSNASNKSVDY. Coiled coils occupy residues 148–259 and 305–336; these read LHKI…EREE and AAQT…IKNI. The disordered stretch occupies residues 374–393; the sequence is HQGTQKSDVPPLTTKGKKAT. Residues 420 to 440 are a coiled coil; that stretch reads EDSKRKYEDLSGEEKHLEVQI. 3 disordered regions span residues 495 to 516, 557 to 580, and 609 to 670; these read RSMQ…YTKG, KHLS…SFGK, and LKTD…KIII. 2 stretches are compositionally biased toward basic and acidic residues: residues 560 to 572 and 621 to 632; these read SNRE…HSDS and GSEEPLQSKESH. Positions 651–662 are enriched in polar residues; sequence TVVNSIKPSSPT.

This sequence belongs to the LCA5 family.

The chain is Lebercilin-like protein (LCA5L) from Homo sapiens (Human).